The chain runs to 374 residues: RNA ligase 1 (374 aa).

The ATP site is built by Tyr37, Arg54, and Lys75. The N6-AMP-lysine intermediate role is filled by Lys99. ATP-binding residues include Glu159, Lys240, and Lys242. Residue Asp272 participates in Mg(2+) binding.

It belongs to the Tequatrovirus RNA ligase 1 family. Mg(2+) is required as a cofactor.

It catalyses the reaction ATP + (ribonucleotide)n-3'-hydroxyl + 5'-phospho-(ribonucleotide)m = (ribonucleotide)n+m + AMP + diphosphate.. Involved in countering a host defense mechanism which, following viral infection, activates the host anticodon nuclease and shuts off viral translation. Repairs 5'-PO4 and 3'-OH groups in the cleaved host tRNA. The nick ligation reaction entails three nucleotidyl transfer steps. In the first step, the RNA ligase reacts with ATP in the absence of nucleic acid to form a covalent ligase-AMP intermediate and release pyrophosphate. In step 2, the ligase-AMP binds to the nicked duplex nucleic acid and transfers the adenylate to the 5'-PO4 terminus to form an adenylylated nicked intermediate. In step 3, the RNA ligase directs the attack of the nick 3'-OH on the 5'-phosphoanhydride linkage, resulting in a repaired 3'-5' phosphodiester and release of AMP. This chain is RNA ligase 1 (63), found in Enterobacteria phage T4 (Bacteriophage T4).